The following is a 77-amino-acid chain: Immune protein Tis1 (77 aa).

Its function is as follows. Immunity protein that plays a role in preventing early activation of toxin Tas1. This Pseudomonas aeruginosa (strain UCBPP-PA14) protein is Immune protein Tis1 (tis1).